The following is a 309-amino-acid chain: Virulence regulon transcriptional activator VirB (309 aa).

A DNA-binding region (H-T-H motif) is located at residues 152–171; that stretch reads KDIAKKENLSRAKVTRAFQA.

It belongs to the ParB family.

Transcription activator for the invasion antigens IpaB, IpaC and IpaD. VirB is itself regulated by VirF. The protein is Virulence regulon transcriptional activator VirB (virB) of Shigella flexneri.